Here is a 37-residue protein sequence, read N- to C-terminus: Potassium channel toxin alpha-KTx 11.2 (37 aa).

Intrachain disulfides connect Cys8–Cys27, Cys13–Cys33, and Cys17–Cys35.

It belongs to the short scorpion toxin superfamily. Potassium channel inhibitor family. Alpha-KTx 11 subfamily. As to expression, expressed by the venom gland.

The protein localises to the secreted. In terms of biological role, binds and inhibits voltage-sensitive potassium channels. Inhibits the vertebrate potassium channel Kv1.1/KCNA1 with low affinity. The protein is Potassium channel toxin alpha-KTx 11.2 of Parabuthus villosus (Black hairy thick-tailed scorpion).